Consider the following 314-residue polypeptide: tRNA pseudouridine synthase B (314 aa).

The Nucleophile role is filled by D54.

Belongs to the pseudouridine synthase TruB family. Type 1 subfamily.

The catalysed reaction is uridine(55) in tRNA = pseudouridine(55) in tRNA. In terms of biological role, responsible for synthesis of pseudouridine from uracil-55 in the psi GC loop of transfer RNAs. This is tRNA pseudouridine synthase B from Cupriavidus metallidurans (strain ATCC 43123 / DSM 2839 / NBRC 102507 / CH34) (Ralstonia metallidurans).